Here is a 2215-residue protein sequence, read N- to C-terminus: Unconventional myosin-VIIa (2215 aa).

The Myosin motor domain maps to 65-741 (HGVEDMIRLG…HDMLLEVERD (677 aa)). 158–165 (GESGAGKT) contacts ATP. An actin-binding region spans residues 632-639 (FVRCIKPN). 5 IQ domains span residues 745-765 (TDRVILLQKVIRGFKDRSNFL), 768-788 (KNAATLIQRHWRGHNCRKNYG), 791-811 (RLGFLRLQALHRSRKLHQQYR), 814-834 (RQRIIQFQARCRAYLVRKAFR), and 837-857 (LWAVLTVQAYARGMIARRLHQ). Positions 858–935 (RLRAEYLWRL…LEQMERARHE (78 aa)) are SAH. A MyTH4 1 domain is found at 1017-1253 (YTRRPLKQPL…PSWLELQATK (237 aa)). Residues 1258–1602 (IMLPVTFMDG…LVVTFLEGLR (345 aa)) enclose the FERM 1 domain. Ser1569 carries the phosphoserine modification. A Phosphothreonine modification is found at Thr1571. The SH3 domain maps to 1603–1672 (KRSKYVVALQ…PTDSVYVMPT (70 aa)). A MyTH4 2 domain is found at 1747–1896 (HTREPLKQAL…PHLVEVEAIQ (150 aa)). The region spanning 1902-2205 (IFHKVYFPDD…SYISQMLTAM (304 aa)) is the FERM 2 domain.

It belongs to the TRAFAC class myosin-kinesin ATPase superfamily. Myosin family. In terms of assembly, might homodimerize in a two headed molecule through the formation of a coiled-coil rod. Identified in a complex with USH1C and USH1G. Interacts with MYRIP. Interacts with RPE65. Interacts with CIB2. May interact with CALM. Interacts with WHRN. Interacts with PLEKHB1 (via PH domain). Interacts with PCDH15. Interacts with TWF2. Interacts with USH1G. Interacts with MYH9. Interacts (via MyTH4-FERM domains) with cytoplasmic regions of ADGRV1 and USH2A. Interacts with PDZD7 (via MyTH4-FERM domains). Interacts with CALML4. Expressed in the pigment epithelium and the photoreceptor cells of the retina. Also found in kidney, liver, testis, cochlea, lymphocytes. Not expressed in brain.

Its subcellular location is the cytoplasm. The protein resides in the cell cortex. The protein localises to the cytoskeleton. It localises to the synapse. Its activity is regulated as follows. ATP hydrolysis is inhibited by Mg(2+), already at a concentration of 0.4 mM. Myosins are actin-based motor molecules with ATPase activity. Unconventional myosins serve in intracellular movements. Their highly divergent tails bind to membranous compartments, which are then moved relative to actin filaments. In the retina, plays an important role in the renewal of the outer photoreceptor disks. Plays an important role in the distribution and migration of retinal pigment epithelial (RPE) melanosomes and phagosomes, and in the regulation of opsin transport in retinal photoreceptors. In the inner ear, plays an important role in differentiation, morphogenesis and organization of cochlear hair cell bundles. Involved in hair-cell vesicle trafficking of aminoglycosides, which are known to induce ototoxicity. Motor protein that is a part of the functional network formed by USH1C, USH1G, CDH23 and MYO7A that mediates mechanotransduction in cochlear hair cells. Required for normal hearing. The chain is Unconventional myosin-VIIa from Homo sapiens (Human).